Consider the following 141-residue polypeptide: Protein stum homolog (141 aa).

A Phosphoserine modification is found at S26. The next 2 membrane-spanning stretches (helical) occupy residues 51–71 (FPVAVICLFLNTFVPGLGTFV) and 87–107 (RHVCCVFWLNIAAALIQVLTA).

The protein belongs to the SPEC3 family. Stum subfamily.

The protein localises to the membrane. This is Protein stum homolog from Mus musculus (Mouse).